The primary structure comprises 170 residues: dCTP pyrophosphatase 1 (170 aa).

The interval Met1–Phe25 is disordered. Ser2 carries the post-translational modification N-acetylserine. Ser2 is subject to Phosphoserine. Residues His38 and Trp47–His51 each bind substrate. Glu63 and Glu66 together coordinate Mg(2+). Trp73 provides a ligand contact to substrate. Mg(2+)-binding residues include Glu95 and Asp98. Tyr102 serves as a coordination point for substrate. Positions Ser150–Thr170 are disordered.

In terms of assembly, homotetramer. Mg(2+) is required as a cofactor. Ubiquitous. Highly expressed in heart, liver, skeletal muscle, cerebellum, brain, and salivary gland.

The protein localises to the cytoplasm. It is found in the cytosol. It catalyses the reaction dCTP + H2O = dCMP + diphosphate + H(+). Its activity is regulated as follows. Inhibited by divalent calcium or cadmium ions. Hydrolyzes deoxynucleoside triphosphates (dNTPs) to the corresponding nucleoside monophosphates. Has a strong preference for dCTP and its analogs including 5-iodo-dCTP and 5-methyl-dCTP for which it may even have a higher efficiency. May protect DNA or RNA against the incorporation of these genotoxic nucleotide analogs through their catabolism. The sequence is that of dCTP pyrophosphatase 1 from Mus musculus (Mouse).